A 117-amino-acid chain; its full sequence is Immunoglobulin heavy variable 7-4-1 (117 aa).

Residues 1–19 form the signal peptide; that stretch reads MDWTWRILFLVAAATGAHS. The framework-1 stretch occupies residues 20-44; sequence QVQLVQSGSELKKPGASVKVSCKAS. Residues 20–117 enclose the Ig-like domain; that stretch reads QVQLVQSGSE…EDTAVYYCAR (98 aa). Cysteines 41 and 115 form a disulfide. The interval 45–52 is complementarity-determining-1; sequence GYTFTSYA. The tract at residues 53 to 69 is framework-2; sequence MNWVRQAPGQGLEWMGW. Residues 70–77 are complementarity-determining-2; it reads INTNTGNP. Residues 78 to 115 form a framework-3 region; it reads TYAQGFTGRFVFSLDTSVSTAYLQICSLKAEDTAVYYC. Residues 116–117 are complementarity-determining-3; sequence AR.

In terms of assembly, immunoglobulins are composed of two identical heavy chains and two identical light chains; disulfide-linked.

It localises to the secreted. It is found in the cell membrane. Functionally, v region of the variable domain of immunoglobulin heavy chains that participates in the antigen recognition. Immunoglobulins, also known as antibodies, are membrane-bound or secreted glycoproteins produced by B lymphocytes. In the recognition phase of humoral immunity, the membrane-bound immunoglobulins serve as receptors which, upon binding of a specific antigen, trigger the clonal expansion and differentiation of B lymphocytes into immunoglobulins-secreting plasma cells. Secreted immunoglobulins mediate the effector phase of humoral immunity, which results in the elimination of bound antigens. The antigen binding site is formed by the variable domain of one heavy chain, together with that of its associated light chain. Thus, each immunoglobulin has two antigen binding sites with remarkable affinity for a particular antigen. The variable domains are assembled by a process called V-(D)-J rearrangement and can then be subjected to somatic hypermutations which, after exposure to antigen and selection, allow affinity maturation for a particular antigen. In Homo sapiens (Human), this protein is Immunoglobulin heavy variable 7-4-1.